A 788-amino-acid chain; its full sequence is Leucine-rich repeat and fibronectin type-III domain-containing protein 2 (788 aa).

A signal peptide spans 1-20 (METLLGGLLAFGMAFAVVDA). The region spanning 21-52 (CPKYCVCQNLSESLGTLCPSKGLLFVPPDIDR) is the LRRNT domain. Residues 21-534 (CPKYCVCQNL…MHSQILGGTM (514 aa)) lie on the Extracellular side of the membrane. N-linked (GlcNAc...) asparagine glycosylation is present at asparagine 29. LRR repeat units lie at residues 53–74 (RTVE…DFAN), 77–98 (GLVD…SFLD), 101–122 (SLRS…TLRG), 125–146 (NLQH…AFED), 150–171 (TLED…SVRR), 174–195 (NLHQ…TFAD), and 198–219 (KLAR…PIFA). One can recognise an LRRCT domain in the interval 242–288 (NPLHCNCELLWLRRLERDDDLETCGSPGSLKGRYFWHIREEEFVCEP). An Ig-like domain is found at 289 to 375 (PLITQHTHKL…GEATATVEVS (87 aa)). Cysteine 310 and cysteine 359 form a disulfide bridge. Residues asparagine 332, asparagine 341, and asparagine 384 are each glycosylated (N-linked (GlcNAc...) asparagine). The interval 383 to 423 (SNSTSRMAPPKSRLSDITGSSKTSRGGGGSGAGEPPKSTPE) is disordered. The region spanning 422–518 (PERAVLVSDV…GCAQFFTKAD (97 aa)) is the Fibronectin type-III domain. The chain crosses the membrane as a helical span at residues 535–555 (ILVIGGIIVATLLVFIVILMV). Residues 556–788 (RYKVCNHDTP…SSEWVMESTV (233 aa)) lie on the Cytoplasmic side of the membrane. Low complexity predominate over residues 620–631 (CDSSSSSSLGSG). 2 disordered regions span residues 620–655 (CDSS…PSLD) and 668–711 (SQRK…RSLL). Over residues 642–651 (RLPPPAPRPK) the composition is skewed to pro residues. Positions 785–788 (ESTV) match the PDZ-binding motif.

This sequence belongs to the LRFN family. As to quaternary structure, forms heteromeric complexes with LRFN1, LRFN3, LRFN4 and LRFN5. Can form homomeric complexes, but not across cell junctions. Interacts with DLG4. Directly interacts with DLG1, DLG2 and DLG3. Directly interacts with 2 NMDA receptor subunits GRIN1 and GRIN2A. In terms of processing, glycosylated. Predominantly expressed in the brain, with a weak, but broad expression in the cerebral cortex and diencephalic nuclei. Strongly expressed in both the pyramidal layer and the dentate gyrus of the hippocampus. Also detected in other parts of the central nervous system, including the olfactory bulb, pons, cerebellum, and medulla oblongata, as well as in the peripheral nervous system, such as the ganglia of cranial nerves and the dorsal root ganglion during gestation.

Its subcellular location is the membrane. The protein localises to the synapse. It localises to the postsynaptic cell membrane. Promotes neurite outgrowth in hippocampal neurons. Enhances the cell surface expression of 2 NMDA receptor subunits GRIN1 and GRIN2A. May play a role in redistributing DLG4 to the cell periphery. This is Leucine-rich repeat and fibronectin type-III domain-containing protein 2 (Lrfn2) from Mus musculus (Mouse).